Reading from the N-terminus, the 430-residue chain is Histidinol dehydrogenase (430 aa).

Residues Tyr-129, Gln-190, and Asn-213 each contribute to the NAD(+) site. Positions 236, 258, and 261 each coordinate substrate. Residues Gln-258 and His-261 each contribute to the Zn(2+) site. Catalysis depends on proton acceptor residues Glu-326 and His-327. Substrate is bound by residues His-327, Asp-360, Glu-414, and His-419. Asp-360 provides a ligand contact to Zn(2+). A Zn(2+)-binding site is contributed by His-419.

The protein belongs to the histidinol dehydrogenase family. The cofactor is Zn(2+).

It carries out the reaction L-histidinol + 2 NAD(+) + H2O = L-histidine + 2 NADH + 3 H(+). It participates in amino-acid biosynthesis; L-histidine biosynthesis; L-histidine from 5-phospho-alpha-D-ribose 1-diphosphate: step 9/9. In terms of biological role, catalyzes the sequential NAD-dependent oxidations of L-histidinol to L-histidinaldehyde and then to L-histidine. The sequence is that of Histidinol dehydrogenase from Caldanaerobacter subterraneus subsp. tengcongensis (strain DSM 15242 / JCM 11007 / NBRC 100824 / MB4) (Thermoanaerobacter tengcongensis).